A 155-amino-acid polypeptide reads, in one-letter code: SsrA-binding protein (155 aa).

This sequence belongs to the SmpB family.

The protein localises to the cytoplasm. Required for rescue of stalled ribosomes mediated by trans-translation. Binds to transfer-messenger RNA (tmRNA), required for stable association of tmRNA with ribosomes. tmRNA and SmpB together mimic tRNA shape, replacing the anticodon stem-loop with SmpB. tmRNA is encoded by the ssrA gene; the 2 termini fold to resemble tRNA(Ala) and it encodes a 'tag peptide', a short internal open reading frame. During trans-translation Ala-aminoacylated tmRNA acts like a tRNA, entering the A-site of stalled ribosomes, displacing the stalled mRNA. The ribosome then switches to translate the ORF on the tmRNA; the nascent peptide is terminated with the 'tag peptide' encoded by the tmRNA and targeted for degradation. The ribosome is freed to recommence translation, which seems to be the essential function of trans-translation. The protein is SsrA-binding protein of Streptococcus pneumoniae (strain P1031).